The chain runs to 448 residues: tRNA-2-methylthio-N(6)-dimethylallyladenosine synthase (448 aa).

The MTTase N-terminal domain maps to 3–120; it reads KKLFIKTHGC…LPTMLDSRQG (118 aa). [4Fe-4S] cluster contacts are provided by C12, C49, C83, C158, C162, and C165. The Radical SAM core domain occupies 144–376; that stretch reads TSDGATAFVS…QERLNQQTMQ (233 aa). In terms of domain architecture, TRAM spans 379–444; it reads RRMVGNTERI…PNSLRGDLAS (66 aa).

This sequence belongs to the methylthiotransferase family. MiaB subfamily. Monomer. [4Fe-4S] cluster is required as a cofactor.

The protein localises to the cytoplasm. It carries out the reaction N(6)-dimethylallyladenosine(37) in tRNA + (sulfur carrier)-SH + AH2 + 2 S-adenosyl-L-methionine = 2-methylsulfanyl-N(6)-dimethylallyladenosine(37) in tRNA + (sulfur carrier)-H + 5'-deoxyadenosine + L-methionine + A + S-adenosyl-L-homocysteine + 2 H(+). Functionally, catalyzes the methylthiolation of N6-(dimethylallyl)adenosine (i(6)A), leading to the formation of 2-methylthio-N6-(dimethylallyl)adenosine (ms(2)i(6)A) at position 37 in tRNAs that read codons beginning with uridine. The chain is tRNA-2-methylthio-N(6)-dimethylallyladenosine synthase from Chromohalobacter salexigens (strain ATCC BAA-138 / DSM 3043 / CIP 106854 / NCIMB 13768 / 1H11).